A 20-amino-acid polypeptide reads, in one-letter code: Hemocyanin subunit Ia (20 aa).

Residues 1–20 are disordered; it reads ADXQPGDSTDKLLAQKQDDV.

The protein belongs to the tyrosinase family. Hemocyanin subfamily. Composed of 3 major subunits (IB, II and III) and 1 minor subunit (IA) which form homohexamers and heterohexamers. May also form larger structures. Hemolymph.

The protein resides in the secreted. It is found in the extracellular space. In terms of biological role, hemocyanins are copper-containing oxygen carriers occurring freely dissolved in the hemolymph of many mollusks and arthropods. The sequence is that of Hemocyanin subunit Ia from Panulirus japonicus (Japanese spiny lobster).